The following is a 598-amino-acid chain: Pentatricopeptide repeat-containing protein At1g09900 (598 aa).

PPR repeat units lie at residues 101–135, 136–170, 171–201, 203–237, 238–272, 273–307, 308–342, 343–377, 378–412, 413–447, 448–482, 483–517, 518–552, and 553–587; these read EDVESNNHLRQMVRTGELEEGFKFLENMVYHGNVP, DIIPCTTLIRGFCRLGKTRKAAKILEILEGSGAVP, DVITYNVMISGYCKAGEINNALSVLDRMSVS, DVVTYNTILRSLCDSGKLKQAMEVLDRMLQRDCYP, DVITYTILIEATCRDSGVGHAMKLLDEMRDRGCTP, DVVTYNVLVNGICKEGRLDEAIKFLNDMPSSGCQP, NVITHNIILRSMCSTGRWMDAEKLLADMLRKGFSP, SVVTFNILINFLCRKGLLGRAIDILEKMPQHGCQP, NSLSYNPLLHGFCKEKKMDRAIEYLERMVSRGCYP, DIVTYNTMLTALCKDGKVEDAVEILNQLSSKGCSP, VLITYNTVIDGLAKAGKTGKAIKLLDEMRAKDLKP, DTITYSSLVGGLSREGKVDEAIKFFHEFERMGIRP, NAVTFNSIMLGLCKSRQTDRAIDFLVFMINRGCKP, and NETSYTILIEGLAYEGMAKEALELLNELCNKGLMK.

It belongs to the PPR family. P subfamily.

The polypeptide is Pentatricopeptide repeat-containing protein At1g09900 (Arabidopsis thaliana (Mouse-ear cress)).